Here is a 213-residue protein sequence, read N- to C-terminus: 3,4-dihydroxy-2-butanone 4-phosphate synthase (213 aa).

D-ribulose 5-phosphate contacts are provided by residues 27-28, Asp-32, 140-144, and Glu-164; these read RE and RTGHT. Position 28 (Glu-28) interacts with Mg(2+). His-143 lines the Mg(2+) pocket.

It belongs to the DHBP synthase family. Homodimer. Mg(2+) serves as cofactor. Mn(2+) is required as a cofactor.

It carries out the reaction D-ribulose 5-phosphate = (2S)-2-hydroxy-3-oxobutyl phosphate + formate + H(+). Its pathway is cofactor biosynthesis; riboflavin biosynthesis; 2-hydroxy-3-oxobutyl phosphate from D-ribulose 5-phosphate: step 1/1. Its function is as follows. Catalyzes the conversion of D-ribulose 5-phosphate to formate and 3,4-dihydroxy-2-butanone 4-phosphate. The polypeptide is 3,4-dihydroxy-2-butanone 4-phosphate synthase (Agrobacterium fabrum (strain C58 / ATCC 33970) (Agrobacterium tumefaciens (strain C58))).